The chain runs to 429 residues: tRNA(Ile2) 2-agmatinylcytidine synthetase TiaS (429 aa).

The segment at residues 271-343 (VRGKVIKKYW…LTLNLEKFYP (73 aa)) is a DNA-binding region (OB).

The protein belongs to the TiaS family.

The protein resides in the cytoplasm. The catalysed reaction is cytidine(34) in tRNA(Ile2) + agmatine + ATP + H2O = 2-agmatinylcytidine(34) in tRNA(Ile2) + AMP + 2 phosphate + 2 H(+). Its function is as follows. ATP-dependent agmatine transferase that catalyzes the formation of 2-agmatinylcytidine (agm2C) at the wobble position (C34) of tRNA(Ile2), converting the codon specificity from AUG to AUA. The polypeptide is tRNA(Ile2) 2-agmatinylcytidine synthetase TiaS (Thermococcus sibiricus (strain DSM 12597 / MM 739)).